A 369-amino-acid polypeptide reads, in one-letter code: UDP-N-acetylglucosamine--N-acetylmuramyl-(pentapeptide) pyrophosphoryl-undecaprenol N-acetylglucosamine transferase (369 aa).

UDP-N-acetyl-alpha-D-glucosamine contacts are provided by residues 10–12 (TAG), asparagine 124, arginine 166, serine 196, isoleucine 251, and glutamine 296.

Belongs to the glycosyltransferase 28 family. MurG subfamily.

The protein resides in the cell membrane. It carries out the reaction di-trans,octa-cis-undecaprenyl diphospho-N-acetyl-alpha-D-muramoyl-L-alanyl-D-glutamyl-meso-2,6-diaminopimeloyl-D-alanyl-D-alanine + UDP-N-acetyl-alpha-D-glucosamine = di-trans,octa-cis-undecaprenyl diphospho-[N-acetyl-alpha-D-glucosaminyl-(1-&gt;4)]-N-acetyl-alpha-D-muramoyl-L-alanyl-D-glutamyl-meso-2,6-diaminopimeloyl-D-alanyl-D-alanine + UDP + H(+). It participates in cell wall biogenesis; peptidoglycan biosynthesis. In terms of biological role, cell wall formation. Catalyzes the transfer of a GlcNAc subunit on undecaprenyl-pyrophosphoryl-MurNAc-pentapeptide (lipid intermediate I) to form undecaprenyl-pyrophosphoryl-MurNAc-(pentapeptide)GlcNAc (lipid intermediate II). In Acetivibrio thermocellus (strain ATCC 27405 / DSM 1237 / JCM 9322 / NBRC 103400 / NCIMB 10682 / NRRL B-4536 / VPI 7372) (Clostridium thermocellum), this protein is UDP-N-acetylglucosamine--N-acetylmuramyl-(pentapeptide) pyrophosphoryl-undecaprenol N-acetylglucosamine transferase.